The chain runs to 239 residues: Large ribosomal subunit protein uL2 (239 aa).

A disordered region spans residues 203-239 (PFGGKEHHPGKPTTTSRRAPPGRKVGHIAARRTGRRK). Residues 222–239 (PPGRKVGHIAARRTGRRK) show a composition bias toward basic residues.

This sequence belongs to the universal ribosomal protein uL2 family. Part of the 50S ribosomal subunit. Forms a bridge to the 30S subunit in the 70S ribosome.

One of the primary rRNA binding proteins. Required for association of the 30S and 50S subunits to form the 70S ribosome, for tRNA binding and peptide bond formation. It has been suggested to have peptidyltransferase activity; this is somewhat controversial. Makes several contacts with the 16S rRNA in the 70S ribosome. The polypeptide is Large ribosomal subunit protein uL2 (Pyrococcus abyssi (strain GE5 / Orsay)).